The following is a 2145-amino-acid chain: Glutamate synthase [NADH] (2145 aa).

Positions 1 to 53 (MPVLKSDNFDPLEEAYEGGTIQNYNDEHHLHKSWANVIPDKRGLYDPDYEHDA) are excised as a propeptide. The active-site For GATase activity is the C54. The region spanning 54–455 (CGVGFVANKH…PGDLFLVDTQ (402 aa)) is the Glutamine amidotransferase type-2 domain. 1132-1189 (LAETHQTLVLNDLRRNVVVQTDGQLRTGFDIAVAVLLGAESFTLATVPLIAMGCVMLR) provides a ligand contact to FMN. [3Fe-4S] cluster is bound by residues C1185, C1191, and C1196. A coiled-coil region spans residues 1551–1600 (KKVLLKEKAEAAKAKAKATSEYLKKFRSNQEVDDEVNTLLIANQKAKEQE). 1928–1942 (GGGDTGNDCLGTSVR) serves as a coordination point for NAD(+). T2070 is subject to Phosphothreonine.

Belongs to the glutamate synthase family. Homotrimer. The cofactor is [3Fe-4S] cluster. FAD serves as cofactor. FMN is required as a cofactor.

The enzyme catalyses 2 L-glutamate + NAD(+) = L-glutamine + 2-oxoglutarate + NADH + H(+). Its pathway is amino-acid biosynthesis; L-glutamate biosynthesis via GLT pathway; L-glutamate from 2-oxoglutarate and L-glutamine (NAD(+) route): step 1/1. It participates in energy metabolism; nitrogen metabolism. Inhibited by homocysteine sulfonamide. In terms of biological role, forms L-glutamate from L-glutamine and 2-oxoglutarate. Represents an alternative pathway to L-glutamate dehydrogenase for the biosynthesis of L-glutamate. Participates with glutamine synthetase in ammonia assimilation processes. The enzyme is specific for NADH, L-glutamine and 2-oxoglutarate. This is Glutamate synthase [NADH] (GLT1) from Saccharomyces cerevisiae (strain ATCC 204508 / S288c) (Baker's yeast).